A 184-amino-acid polypeptide reads, in one-letter code: Urease accessory protein UreE (184 aa).

A disordered region spans residues 147–184; it reads EHHGHSHSHSHSHDHDHDHDHDHQHGPSCSHGHHHGHR. The segment covering 157 to 171 has biased composition (basic and acidic residues); it reads HSHDHDHDHDHDHQH.

The protein belongs to the UreE family.

It localises to the cytoplasm. Involved in urease metallocenter assembly. Binds nickel. Probably functions as a nickel donor during metallocenter assembly. This Burkholderia mallei (strain ATCC 23344) protein is Urease accessory protein UreE.